We begin with the raw amino-acid sequence, 123 residues long: Small ribosomal subunit protein uS12 (123 aa).

The segment at 1 to 28 (MPTIQQLIRTERSKVQKKTKSPALKQCP) is disordered. The residue at position 89 (Asp-89) is a 3-methylthioaspartic acid. The disordered stretch occupies residues 104 to 123 (ATGVKDRKQGRSKYGTKRPK). Residues 113-123 (GRSKYGTKRPK) show a composition bias toward basic residues.

This sequence belongs to the universal ribosomal protein uS12 family. Part of the 30S ribosomal subunit. Contacts proteins S8 and S17. May interact with IF1 in the 30S initiation complex.

In terms of biological role, with S4 and S5 plays an important role in translational accuracy. Interacts with and stabilizes bases of the 16S rRNA that are involved in tRNA selection in the A site and with the mRNA backbone. Located at the interface of the 30S and 50S subunits, it traverses the body of the 30S subunit contacting proteins on the other side and probably holding the rRNA structure together. The combined cluster of proteins S8, S12 and S17 appears to hold together the shoulder and platform of the 30S subunit. The protein is Small ribosomal subunit protein uS12 of Gloeothece citriformis (strain PCC 7424) (Cyanothece sp. (strain PCC 7424)).